Reading from the N-terminus, the 82-residue chain is Immediate early response 3-interacting protein 1 (82 aa).

2 helical membrane-spanning segments follow: residues 2–22 and 62–82; these read AFTL…IAVL and VMRV…LLFG.

Belongs to the YOS1 family.

It is found in the endoplasmic reticulum membrane. Its function is as follows. Regulator of endoplasmic reticulum secretion that acts as a key determinant of brain size. Required for secretion of extracellular matrix proteins. Required for correct brain development by depositing sufficient extracellular matrix proteins for tissue integrity and the proliferation of neural progenitors. Acts as a regulator of the unfolded protein response (UPR). The protein is Immediate early response 3-interacting protein 1 of Rattus norvegicus (Rat).